The following is a 281-amino-acid chain: 2,3,4,5-tetrahydropyridine-2,6-dicarboxylate N-succinyltransferase (281 aa).

R108 and D145 together coordinate substrate.

This sequence belongs to the transferase hexapeptide repeat family. In terms of assembly, homotrimer.

Its subcellular location is the cytoplasm. The enzyme catalyses (S)-2,3,4,5-tetrahydrodipicolinate + succinyl-CoA + H2O = (S)-2-succinylamino-6-oxoheptanedioate + CoA. The protein operates within amino-acid biosynthesis; L-lysine biosynthesis via DAP pathway; LL-2,6-diaminopimelate from (S)-tetrahydrodipicolinate (succinylase route): step 1/3. This Parvibaculum lavamentivorans (strain DS-1 / DSM 13023 / NCIMB 13966) protein is 2,3,4,5-tetrahydropyridine-2,6-dicarboxylate N-succinyltransferase.